The sequence spans 195 residues: Small ribosomal subunit protein bS16 (195 aa).

Positions 171-181 are enriched in low complexity; it reads PEAPVAAAEPA. Residues 171 to 195 are disordered; the sequence is PEAPVAAAEPAPEVKAEEKEEGGEA.

This sequence belongs to the bacterial ribosomal protein bS16 family.

This chain is Small ribosomal subunit protein bS16, found in Chlorobium luteolum (strain DSM 273 / BCRC 81028 / 2530) (Pelodictyon luteolum).